Here is a 165-residue protein sequence, read N- to C-terminus: Nucleotide-binding protein Chy400_2003 (165 aa).

It belongs to the YajQ family.

Nucleotide-binding protein. In Chloroflexus aurantiacus (strain ATCC 29364 / DSM 637 / Y-400-fl), this protein is Nucleotide-binding protein Chy400_2003.